A 397-amino-acid chain; its full sequence is Serpin-Z7 (397 aa).

Alanine 2 carries the post-translational modification N-acetylalanine. The tract at residues 344–368 is RCL; sequence GTKAGAATGDVIVDRSLPIRMDFVA.

It belongs to the serpin family. As to expression, highly expressed in endosperm, at intermediate level in embryo and at lower levels in roots.

In terms of biological role, inhibits chymotrypsin in vitro. The chain is Serpin-Z7 (PAZ7) from Hordeum vulgare (Barley).